We begin with the raw amino-acid sequence, 246 residues long: Type III pantothenate kinase (246 aa).

11–18 (DIGNSFIK) is a binding site for ATP. Substrate is bound by residues tyrosine 95 and 102-105 (GVDR). Aspartate 104 serves as the catalytic Proton acceptor. Aspartate 125 contacts K(+). Threonine 128 is an ATP binding site. Position 179 (threonine 179) interacts with substrate.

Belongs to the type III pantothenate kinase family. As to quaternary structure, homodimer. Requires NH4(+) as cofactor. K(+) is required as a cofactor.

The protein localises to the cytoplasm. The catalysed reaction is (R)-pantothenate + ATP = (R)-4'-phosphopantothenate + ADP + H(+). The protein operates within cofactor biosynthesis; coenzyme A biosynthesis; CoA from (R)-pantothenate: step 1/5. Catalyzes the phosphorylation of pantothenate (Pan), the first step in CoA biosynthesis. This is Type III pantothenate kinase from Pseudoalteromonas atlantica (strain T6c / ATCC BAA-1087).